We begin with the raw amino-acid sequence, 421 residues long: 3-isopropylmalate dehydratase large subunit (421 aa).

C302, C362, and C365 together coordinate [4Fe-4S] cluster.

It belongs to the aconitase/IPM isomerase family. LeuC type 2 subfamily. In terms of assembly, heterodimer of LeuC and LeuD. [4Fe-4S] cluster is required as a cofactor.

The enzyme catalyses (2R,3S)-3-isopropylmalate = (2S)-2-isopropylmalate. It participates in amino-acid biosynthesis; L-leucine biosynthesis; L-leucine from 3-methyl-2-oxobutanoate: step 2/4. Functionally, catalyzes the isomerization between 2-isopropylmalate and 3-isopropylmalate, via the formation of 2-isopropylmaleate. In Campylobacter concisus (strain 13826), this protein is 3-isopropylmalate dehydratase large subunit.